We begin with the raw amino-acid sequence, 535 residues long: Cytochrome P450 monooxygenase atE (535 aa).

C455 contributes to the heme binding site.

This sequence belongs to the cytochrome P450 family. Heme is required as a cofactor.

It catalyses the reaction 3-methylcatechol + AH2 + O2 = 3-methylbenzene-1,2,4-triol + A + H2O. The protein operates within secondary metabolite biosynthesis. Cytochrome P450 monooxygenase; part of the gene cluster that mediates the biosynthesis of terreic acid, a quinone epoxide inhibitor of Bruton's tyrosine kinase. The first step of the pathway is the synthesis of 6-methylsalicylic acid (6-MSA) by the 6-methylsalicylic acid synthase atX. In the biosynthesis of 6-MSA, atX utilizes one acetyl-CoA and three malonyl-CoAs as its substrates and catalyzes a series of programmed reactions including Claisen condensation, reduction, aldol cyclization, and the hydrolytic cleavage that yields 6-MSA. The 6-methylsalicylate 1-monooxygenase atA then catalyzes the decarboxylative hydroxylation of 6-MSA to 3-methylcatechol. The next step is the conversion of 3-methylcatechol to 3-methyl-1,2,4-benzenetriol by cytochrome P450 monooxygenase atE, which is enhanced by cytochrome P450 monooxygenase atG. Then, the epoxidase atD catalyzes the epoxidation and hydroxyl oxidation of 3-methyl-1,2,4-benzenetriol to terremutin. Lastly, GMC oxidoreductase atC oxidizes terremutin to terreic acid. This chain is Cytochrome P450 monooxygenase atE, found in Aspergillus terreus (strain NIH 2624 / FGSC A1156).